Here is a 326-residue protein sequence, read N- to C-terminus: MKVQDMDKCAPSSDWNVLYWVLGTVLMPVALPLAIINIWQRFQAQKFRNQLPGKVVLITGASSGLGESLAHVFYRAGCRVILAARRTQELERVKKDLLALDVDPAYPPTVLPLDLAELNSIPEFVTRVLAVYNQVDILINNGGISVRADVASTAVDVDLKVMVVNYFGSVALTKALLPSMVKRGSGHICFISSVQGKFAIPQRAAYSASKHAMQAFADSLRAEVANKNINVSCVSPGYIRTQLSLNALTGSGSSYGKVDETTAKGMSPDKLAERILQCILRKEPDIIVSDVQAKIAYYLRHLCPSLYFWIMAKRAVKLENAEKKST.

Residues 1–17 lie on the Cytoplasmic side of the membrane; sequence MKVQDMDKCAPSSDWNV. The chain crosses the membrane as a helical; Signal-anchor for type II membrane protein span at residues 18–38; the sequence is LYWVLGTVLMPVALPLAIINI. At 39-326 the chain is on the peroxisomal side; the sequence is WQRFQAQKFR…KLENAEKKST (288 aa). Residue 57 to 81 coordinates NAD(+); the sequence is LITGASSGLGESLAHVFYRAGCRVI. Ser-193 contacts substrate. Tyr-206 functions as the Proton acceptor in the catalytic mechanism.

This sequence belongs to the short-chain dehydrogenases/reductases (SDR) family.

The protein resides in the peroxisome membrane. In terms of biological role, putative oxidoreductase. The chain is Dehydrogenase/reductase SDR family protein 7-like from Drosophila melanogaster (Fruit fly).